Consider the following 748-residue polypeptide: Translation factor GUF1 homolog 1, mitochondrial (748 aa).

Residues 1–29 constitute a mitochondrion transit peptide; sequence MRVGCCLLLKPIRQRLCTASISSRHIMRW. The tr-type G domain occupies 94–276; the sequence is SHIRNFAVVA…AIIERVPPPT (183 aa). GTP contacts are provided by residues 103–110, 167–171, and 221–224; these read AHVDHGKT, DTPGH, and TKMD.

It belongs to the TRAFAC class translation factor GTPase superfamily. Classic translation factor GTPase family. LepA subfamily.

Its subcellular location is the mitochondrion inner membrane. It carries out the reaction GTP + H2O = GDP + phosphate + H(+). Promotes mitochondrial protein synthesis. May act as a fidelity factor of the translation reaction, by catalyzing a one-codon backward translocation of tRNAs on improperly translocated ribosomes. Binds to mitochondrial ribosomes in a GTP-dependent manner. This is Translation factor GUF1 homolog 1, mitochondrial from Trypanosoma cruzi (strain CL Brener).